The following is a 352-amino-acid chain: Zinc finger CCCH domain-containing protein 42 (352 aa).

Residues 36–114 enclose the RRM domain; the sequence is AYVYVGGIPF…RTIKVDHCGA (79 aa). 2 consecutive C3H1-type zinc fingers follow at residues 130 to 157 and 180 to 207; these read REAR…HDEK and REGR…HDEK. A disordered region spans residues 156 to 179; that stretch reads EKRAANTGWGHEEDRSSKWDHDKN. 3 stretches are compositionally biased toward basic and acidic residues: residues 210 to 230, 243 to 296, and 304 to 352; these read ATTG…DKLN, GDFK…RSGR, and RHND…DRRR. Residues 210-352 are disordered; sequence ATTGWGHEED…DSLRREDRRR (143 aa). The stretch at 319-348 forms a coiled coil; it reads RAQDWEKRKAESRRDRNDREEKDRDSLRRE.

The polypeptide is Zinc finger CCCH domain-containing protein 42 (Arabidopsis thaliana (Mouse-ear cress)).